A 461-amino-acid polypeptide reads, in one-letter code: MSIPHINKLSQDGRVRFSNWAKTFSAISLGLRCPKTEEQLREILVDANSNGKKIRVVGAGHSPSDIVCTSGYLLSLDKMNKVVSFDPDSLSITVQAGIRFYQVQEILQNLGYSLPIVGSISETSVSGIMSTCTHGSSLQHQVLPHYIKSMRIMLADGSIVTCSRELQKDMFAAAQVSLGALGVIVDITISVVPAFDLVATEDVTTVTDLFQDWKNNLIWESAEFVRVHVFPYANRAVVWRANKVEPNTVPHTPKPSLFRLKLDSFVYQCLLFVGKCVNRVTPYLERFWFKCHYGSKLGTALQVAGPGFDVLQMFCYFSQHVSEWGIPLESAPDALEKLINYTVDDAGKIGAYTHWPIEVRVCAPTPEDECWLSTDCKVPTCYIEAIMYRPFSTSINYKPYFKALEDIANQYNGKPHWAKEYSLTKEQLLERYPNLSKWLSLRKLLDPKGVFWNDYLQRHLG.

Residues 24 to 194 (FSAISLGLRC…VDITISVVPA (171 aa)) enclose the FAD-binding PCMH-type domain. The residue at position 61 (His61) is a Pros-8alpha-FAD histidine.

It belongs to the oxygen-dependent FAD-linked oxidoreductase family. Requires FAD as cofactor.

Its subcellular location is the mitochondrion membrane. It carries out the reaction D-arabinono-1,4-lactone + O2 = dehydro-D-arabinono-1,4-lactone + H2O2 + H(+). It functions in the pathway cofactor biosynthesis; D-erythroascorbate biosynthesis; dehydro-D-arabinono-1,4-lactone from D-arabinose: step 2/2. This is D-arabinono-1,4-lactone oxidase (alo1) from Schizosaccharomyces pombe (strain 972 / ATCC 24843) (Fission yeast).